A 238-amino-acid chain; its full sequence is MKPKASHALRSPINTPIMDHDSEARQMLESLCASQGIALDPAQIDKLVYYGELLGEWNMKINLISRKEDAPVILKHVFHSLLISLHHPFTEGEKVLDLGTGGGLPGIPLAIAFPKTDFLLVDATGKKITACQGMITALGLKNATALHSRVEELKGLAFDTVLSRQVAPLADLARYARPLLKKGGMLACLKGGNLKKEIAEALREGAETDGFPSSVELHPIDDISPFFSEKQIVIAARQ.

Residues Gly99, Leu104, 122-124, 150-151, and Arg164 each bind S-adenosyl-L-methionine; these read DAT and VE.

Belongs to the methyltransferase superfamily. RNA methyltransferase RsmG family.

It localises to the cytoplasm. Specifically methylates the N7 position of a guanine in 16S rRNA. The chain is Ribosomal RNA small subunit methyltransferase G from Chlorobium luteolum (strain DSM 273 / BCRC 81028 / 2530) (Pelodictyon luteolum).